Reading from the N-terminus, the 20-residue chain is Cytochrome P450IIB (20 aa).

The protein belongs to the cytochrome P450 family. It depends on heme as a cofactor.

It is found in the endoplasmic reticulum membrane. The protein resides in the microsome membrane. The enzyme catalyses an organic molecule + reduced [NADPH--hemoprotein reductase] + O2 = an alcohol + oxidized [NADPH--hemoprotein reductase] + H2O + H(+). Functionally, cytochromes P450 are a group of heme-thiolate monooxygenases. In liver microsomes, this enzyme is involved in an NADPH-dependent electron transport pathway. This isozyme is active upon P.nitroanisole, aniline, D-benzphetamine, delta(9)-tetrahydrocannabinol (THC) and strychnine. The chain is Cytochrome P450IIB from Cavia porcellus (Guinea pig).